The following is a 773-amino-acid chain: MAQEAMEYNVDEQLEHRVAEQPVPAEVVSTQGGPPPLQPLPTEVVSSQGAPPLLQPAPAEGTSSQVGPHLLQPAAQLSVDLTEEVELLGEDRVENINPGASEEHRQPSRVNRPIPVSSLDSMNSFISGLQRLHGMLEFLRPPSDHNVGPVRSRRRRGSASRRSRTVGSQRTDSARSRAPLDAYFQVSRTQPHLPSMSQDSETRNPVSEDLQVSSSSSSDSESSAEYEEVVVQAEDTRAVVSEEQGGTAAEQEVTCVGGGETLPKQSPQKTNPLLPSVSKDDEEGDTCTICFEHWTNAGDHRLSALRCGHLFGYKCISKWLKGQARKCPQCNKKAKHSDIVVLYARTLRALDTSEHERMKSSLLKEQMLRKQAELESAQCRLQLQVLTDECSKLHSRVQDLQKLTVQHRDQISQSPSGSQARSLNCLPSSQNQRKYHFQKTFTVSPTGNCRIMTYCDALSCLVVSQPSPQASFLPGFGVKMLSTANMKSSQYVPMHGKQIRGLAFSSRSKGLLLSASLDSTVKLTSLETNTVVQTYNAGRPVWSCCWCLDESNHIYAGLVNGSILVYDLRNTSSHIQELVPQKARCPLVSLSYIPRAASAAFPYGGVLAGTLENASFWELKMGFSHWPHVLPMEPGGCVDFQTESSTRHCLVTYRPDKNHNTLRSVLMEMSYKLNDAGEPVCSCRPVQTFLGGPTCKLLTKSAIFQNPENDGSILVCTGDEASNSALLWDAGSGSLLQELQADQPVLDICPFEANHSSCLATLTEKMVHIYRWE.

Disordered regions lie at residues Val18–Gly67, Arg92–Ser117, Leu139–Val230, and Gly259–Lys279. Ser47 is subject to Phosphoserine; by ATM and ATR. The segment covering Ala50–Ala59 has biased composition (low complexity). Position 64 is a phosphoserine; by ATM and ATR (Ser64). The span at Arg151–Arg164 shows a compositional bias: basic residues. Positions Val186–Pro205 are enriched in polar residues. The segment covering Ser207–Glu221 has biased composition (low complexity). Positions Pro263–Leu273 are enriched in polar residues. The segment at Cys287–Asn331 adopts an RING-type; degenerate zinc-finger fold. Residues Ser361–Leu403 are a coiled coil. WD repeat units lie at residues Met494–Asn536, Gly538–Gln576, and Lys582–Pro627.

As to quaternary structure, interacts with MDM2 and p53/TP53. Binds to the RPA complex via direct interaction with RPA2. Interacts with RAD51. In terms of processing, phosphorylated at Ser-46 and Ser-63 upon DNA damage by ATM or ATR. ATM phosphorylation occurs at early times upon DNA damage, while ATR is the major kinase at later times. Phosphorylation by ATM and ATR is required to stabilize p53/TP53. Part of the phosphorylation depends upon RPA2 presence.

Its subcellular location is the nucleus. The protein resides in the PML body. It is found in the cytoplasm. The catalysed reaction is S-ubiquitinyl-[E2 ubiquitin-conjugating enzyme]-L-cysteine + [acceptor protein]-L-lysine = [E2 ubiquitin-conjugating enzyme]-L-cysteine + N(6)-ubiquitinyl-[acceptor protein]-L-lysine.. Its pathway is protein modification; protein ubiquitination. In terms of biological role, E3 ubiquitin-protein ligase required for the repair of DNA interstrand cross-links (ICL) in response to DNA damage. Plays a key role in RPA-mediated DNA damage signaling and repair. Acts by mediating ubiquitination of the RPA complex (RPA1, RPA2 and RPA3 subunits) and RAD51 at stalled replication forks, leading to remove them from DNA damage sites and promote homologous recombination. Also mediates the ubiquitination of p53/TP53 in the late response to DNA damage, and acts as a positive regulator of p53/TP53 stability, thereby regulating the G1/S DNA damage checkpoint. May act by catalyzing the formation of short polyubiquitin chains on p53/TP53 that are not targeted to the proteasome. In response to ionizing radiation, interacts with MDM2 and enhances p53/TP53 ubiquitination, possibly by restricting MDM2 from extending polyubiquitin chains on ubiquitinated p53/TP53. Required to translesion DNA synthesis across DNA-protein cross-link adducts by catalyzing ubiquitination of proteins on single-stranded DNA (ssDNA). This is E3 ubiquitin-protein ligase RFWD3 (RFWD3) from Ailuropoda melanoleuca (Giant panda).